A 159-amino-acid chain; its full sequence is Protein-export protein SecB (159 aa).

The protein belongs to the SecB family. In terms of assembly, homotetramer, a dimer of dimers. One homotetramer interacts with 1 SecA dimer.

It is found in the cytoplasm. Its function is as follows. One of the proteins required for the normal export of preproteins out of the cell cytoplasm. It is a molecular chaperone that binds to a subset of precursor proteins, maintaining them in a translocation-competent state. It also specifically binds to its receptor SecA. This is Protein-export protein SecB from Pseudomonas fluorescens (strain ATCC BAA-477 / NRRL B-23932 / Pf-5).